The primary structure comprises 261 residues: Cytochrome c oxidase subunit 3 (261 aa).

The Mitochondrial matrix segment spans residues 1 to 15; the sequence is MTHQTHAYHMVNPSP. A helical membrane pass occupies residues 16-34; sequence WPLTGALSALLMSSGLTMW. The Mitochondrial intermembrane segment spans residues 35–40; sequence FHFNSL. Residues 41–66 traverse the membrane as a helical segment; sequence ILLTTGLVTNILTMYQWWRDVIREST. Residues 67–72 lie on the Mitochondrial matrix side of the membrane; that stretch reads FQGHHT. The helical transmembrane segment at 73-105 threads the bilayer; the sequence is PVVQKGLRYGMVLFIISEVLFFTGFFWAFYHSS. The Mitochondrial intermembrane segment spans residues 106-128; the sequence is LAPTPELGGCWPPTGINPLNPLE. A helical transmembrane segment spans residues 129 to 152; that stretch reads VPLLNTSVLLASGVSITWAHHSLM. Residues 153-155 are Mitochondrial matrix-facing; that stretch reads EGN. A helical transmembrane segment spans residues 156-183; the sequence is RKQMLQALFITIALGVYFTLLQASEYHE. Over 184-190 the chain is Mitochondrial intermembrane; that stretch reads ASFTISD. A helical membrane pass occupies residues 191–223; sequence GVYGSTFFVATGFHGLHVIIGSTFLIVCFLRQL. The Mitochondrial matrix segment spans residues 224–232; the sequence is KFHFTSDHH. A helical transmembrane segment spans residues 233-256; sequence FGFEAAAWYWHFVDVVWLFLYVSI. At 257–261 the chain is on the mitochondrial intermembrane side; it reads YWWGS.

It belongs to the cytochrome c oxidase subunit 3 family. Component of the cytochrome c oxidase (complex IV, CIV), a multisubunit enzyme composed of 14 subunits. The complex is composed of a catalytic core of 3 subunits MT-CO1, MT-CO2 and MT-CO3, encoded in the mitochondrial DNA, and 11 supernumerary subunits COX4I, COX5A, COX5B, COX6A, COX6B, COX6C, COX7A, COX7B, COX7C, COX8 and NDUFA4, which are encoded in the nuclear genome. The complex exists as a monomer or a dimer and forms supercomplexes (SCs) in the inner mitochondrial membrane with NADH-ubiquinone oxidoreductase (complex I, CI) and ubiquinol-cytochrome c oxidoreductase (cytochrome b-c1 complex, complex III, CIII), resulting in different assemblies (supercomplex SCI(1)III(2)IV(1) and megacomplex MCI(2)III(2)IV(2)).

It localises to the mitochondrion inner membrane. The catalysed reaction is 4 Fe(II)-[cytochrome c] + O2 + 8 H(+)(in) = 4 Fe(III)-[cytochrome c] + 2 H2O + 4 H(+)(out). Functionally, component of the cytochrome c oxidase, the last enzyme in the mitochondrial electron transport chain which drives oxidative phosphorylation. The respiratory chain contains 3 multisubunit complexes succinate dehydrogenase (complex II, CII), ubiquinol-cytochrome c oxidoreductase (cytochrome b-c1 complex, complex III, CIII) and cytochrome c oxidase (complex IV, CIV), that cooperate to transfer electrons derived from NADH and succinate to molecular oxygen, creating an electrochemical gradient over the inner membrane that drives transmembrane transport and the ATP synthase. Cytochrome c oxidase is the component of the respiratory chain that catalyzes the reduction of oxygen to water. Electrons originating from reduced cytochrome c in the intermembrane space (IMS) are transferred via the dinuclear copper A center (CU(A)) of subunit 2 and heme A of subunit 1 to the active site in subunit 1, a binuclear center (BNC) formed by heme A3 and copper B (CU(B)). The BNC reduces molecular oxygen to 2 water molecules using 4 electrons from cytochrome c in the IMS and 4 protons from the mitochondrial matrix. In Hippopotamus amphibius (Hippopotamus), this protein is Cytochrome c oxidase subunit 3 (MT-CO3).